The sequence spans 494 residues: Cytochrome P450 2A5 (494 aa).

Phosphoserine is present on Ser131. Position 379 is an N6-acetyllysine (Lys379). Residue Cys439 participates in heme binding.

Belongs to the cytochrome P450 family. Heme is required as a cofactor. As to expression, liver, with a strong circadian rhythmicity. Circadian expression is regulated by DBP.

Its subcellular location is the endoplasmic reticulum membrane. The protein resides in the microsome membrane. The enzyme catalyses an organic molecule + reduced [NADPH--hemoprotein reductase] + O2 = an alcohol + oxidized [NADPH--hemoprotein reductase] + H2O + H(+). Exhibits a high coumarin 7-hydroxylase activity. This chain is Cytochrome P450 2A5 (Cyp2a5), found in Mus musculus (Mouse).